Reading from the N-terminus, the 332-residue chain is L-lactate dehydrogenase A chain (332 aa).

NAD(+)-binding positions include 29 to 57 and R99; that span reads GMVGMASAISILLKDLCDELALVDVMEDK. Positions 106, 138, and 169 each coordinate substrate. N138 provides a ligand contact to NAD(+). Residue H193 is the Proton acceptor of the active site. Position 248 (T248) interacts with substrate.

This sequence belongs to the LDH/MDH superfamily. LDH family. In terms of assembly, homotetramer.

It is found in the cytoplasm. The catalysed reaction is (S)-lactate + NAD(+) = pyruvate + NADH + H(+). Its pathway is fermentation; pyruvate fermentation to lactate; (S)-lactate from pyruvate: step 1/1. Interconverts simultaneously and stereospecifically pyruvate and lactate with concomitant interconversion of NADH and NAD(+). The sequence is that of L-lactate dehydrogenase A chain (ldha) from Gillichthys seta (Shortjaw mudsucker).